A 417-amino-acid polypeptide reads, in one-letter code: Acetate kinase (417 aa).

Asn-7 contributes to the Mg(2+) binding site. Lys-14 provides a ligand contact to ATP. Residue Arg-104 participates in substrate binding. Asp-162 acts as the Proton donor/acceptor in catalysis. ATP is bound by residues 222–226 (HLGNG), 297–299 (DMR), and 346–350 (GIGEN). Glu-401 lines the Mg(2+) pocket.

Belongs to the acetokinase family. As to quaternary structure, homodimer. The cofactor is Mg(2+). Mn(2+) is required as a cofactor.

It is found in the cytoplasm. It carries out the reaction acetate + ATP = acetyl phosphate + ADP. The protein operates within metabolic intermediate biosynthesis; acetyl-CoA biosynthesis; acetyl-CoA from acetate: step 1/2. In terms of biological role, catalyzes the formation of acetyl phosphate from acetate and ATP. Can also catalyze the reverse reaction. The protein is Acetate kinase of Chloroherpeton thalassium (strain ATCC 35110 / GB-78).